The following is a 1024-amino-acid chain: Unconventional myosin-Ig (1024 aa).

The region spanning 15–713 (YGKPDFVLLD…TLVTLEQSRA (699 aa)) is the Myosin motor domain. 108–115 (GESGAGKT) is a binding site for ATP. An actin-binding region spans residues 590–612 (MVALVENLASKEPFYVRCIKPNE). One can recognise an IQ domain in the interval 716–745 (IPIIVLLLQKAWRGTLARWHCRRLRAIYTI). In terms of domain architecture, TH1 spans 830–1023 (GLRQDWGCQR…RSTFTLLWPS (194 aa)). The disordered stretch occupies residues 999 to 1024 (VEPRPEQPEPDFQSSRSTFTLLWPSH).

Belongs to the TRAFAC class myosin-kinesin ATPase superfamily. Myosin family. In terms of assembly, interacts with calmodulin; via its IQ motifs. As to expression, specifically expressed in hematopoietic cells. Detected in adult tissues of the immune system such as thymus, lymph nodes and spleen, but not in brain, lung, heart, liver, small intestine, testis and kidney (at protein level). Highly expressed in T-lymphocytes; constitutes the most highly expressed class I myosin in naive CD4 and CD8 T-cells. Also present in B-lymphocytes.

It is found in the cell membrane. The protein localises to the cell projection. The protein resides in the phagocytic cup. Its function is as follows. Unconventional myosin required during immune response for detection of rare antigen-presenting cells by regulating T-cell migration. Unconventional myosins are actin-based motor molecules with ATPase activity and serve in intracellular movements. Acts as a regulator of T-cell migration by generating membrane tension, enforcing cell-intrinsic meandering search, thereby enhancing detection of rare antigens during lymph-node surveillance, enabling pathogen eradication. Also required in B-cells, where it regulates different membrane/cytoskeleton-dependent processes. Involved in Fc-gamma receptor (Fc-gamma-R) phagocytosis. The polypeptide is Unconventional myosin-Ig (Myo1g) (Mus musculus (Mouse)).